A 263-amino-acid polypeptide reads, in one-letter code: MSSCVVTTSCFYTISDSSIRLKSPKLLNLSNQQRRRSLRSRGGLKVEAYYGLKTPPYPLDALEPYMSRRTLEVHWGKHHRGYVDNLNKQLGKDDRLYGYTMEELIKATYNNGNPLPEFNNAAQVYNHDFFWESMQPGGGDTPQKGVLEQIDKDFGSFTNFREKFTNAALTQFGSGWVWLVLKREERRLEVVKTSNAINPLVWDDIPIICVDVWEHSYYLDYKNDRAKYINTFLNHLVSWNAAMSRMARAEAFVNLGEPNIPIA.

Residues 1–41 constitute a chloroplast transit peptide; that stretch reads MSSCVVTTSCFYTISDSSIRLKSPKLLNLSNQQRRRSLRSR. Positions 74, 127, 211, and 215 each coordinate Fe cation.

The protein belongs to the iron/manganese superoxide dismutase family. As to quaternary structure, homodimer. Heterodimer with FSD2. Interacts with MRL7. The cofactor is Fe cation.

It is found in the plastid. The protein resides in the chloroplast thylakoid. It catalyses the reaction 2 superoxide + 2 H(+) = H2O2 + O2. With respect to regulation, activated by cpn20/cpn21 (in vitro). Destroys superoxide anion radicals which are normally produced within the cells and which are toxic to biological systems. Plays important role in chloroplast development, particularly in the maintenance of thylakoids membranes. Seems to act as a heterodimer with FSD2. The protein is Superoxide dismutase [Fe] 3, chloroplastic of Arabidopsis thaliana (Mouse-ear cress).